The sequence spans 423 residues: GPI mannosyltransferase 2 (423 aa).

The next 9 helical transmembrane spans lie at Ile11–Gly31, Trp106–Leu126, Leu139–Pro159, Tyr160–Leu180, Gly197–Val219, Leu240–Leu260, Tyr299–Leu319, Leu351–Ile371, and Gly400–Leu420.

Belongs to the PIGV family.

Its subcellular location is the endoplasmic reticulum membrane. It functions in the pathway glycolipid biosynthesis; glycosylphosphatidylinositol-anchor biosynthesis. Functionally, mannosyltransferase involved in glycosylphosphatidylinositol-anchor biosynthesis. Transfers the second mannose to the glycosylphosphatidylinositol during GPI precursor assembly. The chain is GPI mannosyltransferase 2 (GPI18) from Gibberella zeae (strain ATCC MYA-4620 / CBS 123657 / FGSC 9075 / NRRL 31084 / PH-1) (Wheat head blight fungus).